The chain runs to 34 residues: Photosystem II reaction center protein M (34 aa).

The chain crosses the membrane as a helical span at residues 5–25; it reads ILAFIATALFILIPTAFLLII.

It belongs to the PsbM family. PSII is composed of 1 copy each of membrane proteins PsbA, PsbB, PsbC, PsbD, PsbE, PsbF, PsbH, PsbI, PsbJ, PsbK, PsbL, PsbM, PsbT, PsbX, PsbY, PsbZ, Psb30/Ycf12, at least 3 peripheral proteins of the oxygen-evolving complex and a large number of cofactors. It forms dimeric complexes.

The protein localises to the plastid. It is found in the chloroplast thylakoid membrane. Functionally, one of the components of the core complex of photosystem II (PSII). PSII is a light-driven water:plastoquinone oxidoreductase that uses light energy to abstract electrons from H(2)O, generating O(2) and a proton gradient subsequently used for ATP formation. It consists of a core antenna complex that captures photons, and an electron transfer chain that converts photonic excitation into a charge separation. This subunit is found at the monomer-monomer interface. The polypeptide is Photosystem II reaction center protein M (Agrostis stolonifera (Creeping bentgrass)).